The following is a 355-amino-acid chain: Probable low-specificity L-threonine aldolase 2 (355 aa).

Residue lysine 211 is modified to N6-(pyridoxal phosphate)lysine.

The protein belongs to the threonine aldolase family. Pyridoxal 5'-phosphate serves as cofactor. Expressed in roots, leaf vasculature and flowers.

It catalyses the reaction L-threonine = acetaldehyde + glycine. The catalysed reaction is L-allo-threonine = acetaldehyde + glycine. It functions in the pathway amino-acid degradation; L-threonine degradation via aldolase pathway; acetaldehyde and glycine from L-threonine: step 1/1. In terms of biological role, threonine aldolase involved in threonine degradation to glycine. May play a role in the removal of L-allo-threonine. The polypeptide is Probable low-specificity L-threonine aldolase 2 (THA2) (Arabidopsis thaliana (Mouse-ear cress)).